Reading from the N-terminus, the 319-residue chain is 8-methylmenaquinol:fumarate reductase iron-sulfur subunit (319 aa).

Residues 1 to 96 (MKFIIDRFDG…TFRISPLGNH (96 aa)) form the 2Fe-2S ferredoxin-type domain. Cys51, Cys56, Cys59, and Cys71 together coordinate [2Fe-2S] cluster. 4Fe-4S ferredoxin-type domains lie at 139–168 (FDRI…QSDY) and 193–224 (VKPA…AEDI). The [4Fe-4S] cluster site is built by Cys148, Cys151, Cys154, Cys158, Cys204, Cys207, Cys210, and Cys214.

The protein belongs to the succinate dehydrogenase/fumarate reductase iron-sulfur protein family. In terms of assembly, the MFR complex is composed of three subunits: a flavoprotein (SdhA), an iron-sulfur protein (SdhB), and one hydrophobic anchor protein (SdhE). It depends on [2Fe-2S] cluster as a cofactor. Requires [4Fe-4S] cluster as cofactor.

The protein resides in the periplasm. It is found in the cell membrane. It catalyses the reaction 8-methylmenaquinone-6 + succinate = 8-methylmenaquinol-6 + fumarate. Functionally, iron-sulfur subunit of 8-methylmenaquinol:fumarate reductase (MFR), that catalyzes the reduction of fumarate using 8-methylmenaquinol-6 as electron donor. The complex shows no succinate oxidation activity. Is involved in anaerobic metabolism. In Wolinella succinogenes (strain ATCC 29543 / DSM 1740 / CCUG 13145 / JCM 31913 / LMG 7466 / NCTC 11488 / FDC 602W) (Vibrio succinogenes), this protein is 8-methylmenaquinol:fumarate reductase iron-sulfur subunit.